The primary structure comprises 254 residues: Proteasome subunit alpha (254 aa).

The disordered stretch occupies residues 231 to 254 (ESGAASADGEAETEAETDSGSDEE). Residues 239-254 (GEAETEAETDSGSDEE) show a composition bias toward acidic residues.

This sequence belongs to the peptidase T1A family. In terms of assembly, the 20S proteasome core is composed of 14 alpha and 14 beta subunits that assemble into four stacked heptameric rings, resulting in a barrel-shaped structure. The two inner rings, each composed of seven catalytic beta subunits, are sandwiched by two outer rings, each composed of seven alpha subunits. The catalytic chamber with the active sites is on the inside of the barrel. Has probably a gated structure, the ends of the cylinder being occluded by the N-termini of the alpha-subunits. Is likely capped by the proteasome-associated ATPase, ARC. Post-translationally, the N-terminus is blocked.

The protein resides in the cytoplasm. It participates in protein degradation; proteasomal Pup-dependent pathway. The formation of the proteasomal ATPase ARC-20S proteasome complex, likely via the docking of the C-termini of ARC into the intersubunit pockets in the alpha-rings, may trigger opening of the gate for substrate entry. Interconversion between the open-gate and close-gate conformations leads to a dynamic regulation of the 20S proteasome proteolysis activity. Peptidolytic activity is completely inhibited by lactacystin, and to a lesser extent, by N-acetyl-Leu-Leu-norleucinal (Ac-LLnL) and benzoyloxycarbonyl-Leu-Leu-Leu-vinylsulfone (Z-LLL-VS) in vitro. Component of the proteasome core, a large protease complex with broad specificity involved in protein degradation. The S.coelicolor proteasome is able to cleave oligopeptides after hydrophobic residues, but not after basic or acidic residues, thus displaying chymotrypsin-like activity but not trypsin-like activity. The protein is Proteasome subunit alpha of Streptomyces coelicolor (strain ATCC BAA-471 / A3(2) / M145).